Here is a 236-residue protein sequence, read N- to C-terminus: Purine nucleoside phosphorylase DeoD-type (236 aa).

Residue His-4 participates in a purine D-ribonucleoside binding. Residues Gly-20, Arg-24, Arg-43, and 87 to 90 each bind phosphate; that span reads RVGT. A purine D-ribonucleoside-binding positions include 179-181 and 203-204; these read EME and SD. The active-site Proton donor is Asp-204.

Belongs to the PNP/UDP phosphorylase family. As to quaternary structure, homohexamer; trimer of homodimers.

The enzyme catalyses a purine D-ribonucleoside + phosphate = a purine nucleobase + alpha-D-ribose 1-phosphate. The catalysed reaction is a purine 2'-deoxy-D-ribonucleoside + phosphate = a purine nucleobase + 2-deoxy-alpha-D-ribose 1-phosphate. Its function is as follows. Catalyzes the reversible phosphorolytic breakdown of the N-glycosidic bond in the beta-(deoxy)ribonucleoside molecules, with the formation of the corresponding free purine bases and pentose-1-phosphate. This chain is Purine nucleoside phosphorylase DeoD-type, found in Streptococcus pneumoniae serotype 2 (strain D39 / NCTC 7466).